Consider the following 192-residue polypeptide: Cytidylate kinase (192 aa).

12-20 (GLAGSGTTT) is a binding site for ATP.

The protein belongs to the cytidylate kinase family. Type 2 subfamily.

The protein localises to the cytoplasm. It catalyses the reaction CMP + ATP = CDP + ADP. It carries out the reaction dCMP + ATP = dCDP + ADP. The protein is Cytidylate kinase of Pyrococcus furiosus (strain ATCC 43587 / DSM 3638 / JCM 8422 / Vc1).